A 392-amino-acid chain; its full sequence is Fasciculation and elongation protein zeta-1 (392 aa).

Residues 1–37 form a disordered region; the sequence is MEAPLVSLDEEFEDLRPSCSEDPEEKPQCFYGSSPHH. A Phosphoserine modification is found at Ser-58. Residues 175–198 are disordered; sequence MQNSPDPEEEEEVLEEEDGGETSS. Over residues 180–194 the composition is skewed to acidic residues; that stretch reads DPEEEEEVLEEEDGG. Residues 230-298 adopt a coiled-coil conformation; it reads SELTELLDQV…KKRRKEKGLS (69 aa). 2 positions are modified to phosphoserine: Ser-298 and Ser-316.

Belongs to the zygin family. Homodimer; disulfide-linked. May form heterodimers with FEZ2. Interacts with the NH2-terminal variable region (V1) of PKC zeta and weakly with that of PKC epsilon. Interacts with UBE4B. Interacts with SAP30L. Interacts with SCOC and ULK1; SCOC interferes with ULK1-binding to FEZ1. Directly interacts with SCOC and UVRAG. Stabilizes the interaction between SCOC and UVRAG during amino acid starvation. In terms of processing, phosphorylated by protein kinase C zeta; which enhances interaction with UBE4B and polyubiquitination. Post-translationally, polyubiquitinated in a UBE4B-dependent manner; which does not lead to proteasomal degradation and may be important for neurogenic activity. Polyubiquitin linkage seems to be mainly through Lys-26. As to expression, mainly expressed in brain.

The protein localises to the cytoplasm. It is found in the cytoskeleton. Its subcellular location is the microtubule organizing center. The protein resides in the centrosome. It localises to the cell membrane. Its function is as follows. May be involved in axonal outgrowth as component of the network of molecules that regulate cellular morphology and axon guidance machinery. Able to restore partial locomotion and axonal fasciculation to C.elegans unc-76 mutants in germline transformation experiments. May participate in the transport of mitochondria and other cargos along microtubules. The sequence is that of Fasciculation and elongation protein zeta-1 (FEZ1) from Homo sapiens (Human).